Consider the following 712-residue polypeptide: MGMRIKLQSTNHPNNLLKELNKCRLSETMCDVTIVVGSRSFPAHKAVLACAAGYFQNLFLNTGLDAARTYVVDFITPANFEKVLSFVYTSELFTDLINVGVIYEVAERLGMEDLLQACHSTFPDLESTARAKPLTSTSESHSGTLSCPSAEPAHPLGELRGGGDYLGADRNYVLPSDAGGSYKEEEKNVASDANHSLHLPQPPPPPPKTEDHDTPAPFTSIPSMMTQPLLGTVSTGIQTSTSSCQPYKVQSNGDFSKNSFLTPDNAVDITTGTNSCLSNSEHSKDPGFGQMDELQLEDLGDDDLQFEDPAEDIGTTEEVIELSDDSEDELAFGENDNRENKAMPCQVCKKVLEPNIQLIRQHARDHVDLLTGNCKVCETHFQDRNSRVTHVLSHIGIFLFSCDMCETKFFTQWQLTLHRRDGIFENNIIVHPNDPLPGKLGLFSGAASPELKCAACGKVLAKDFHVVRGHILDHLNLKGQACSVCDQRHLNLCSLMWHTLSHLGISVFSCSVCANSFVDWHLLEKHMAVHQSLEDALFHCRLCSQSFKSEAAYRYHVSQHKCNSGLDARPGFGLQHPALQKRKLPAEEFLGEELALQGQPGNSKYSCKVCGKRFAHTSEFNYHRRIHTGEKPYQCKVCHKFFRGRSTIKCHLKTHSGALMYRCTVCGHYSSTLNLMSKHVGVHKGSLPPDFTIEQTFMYIIHSKEADKNPDS.

The BTB domain occupies 30 to 96; sequence CDVTIVVGSR…VYTSELFTDL (67 aa). Disordered stretches follow at residues 129-162, 176-224, and 236-260; these read ARAK…LRGG, SDAG…IPSM, and GIQT…KNSF. A compositionally biased stretch (polar residues) spans 134–147; sequence LTSTSESHSGTLSC. Residue Lys183 forms a Glycyl lysine isopeptide (Lys-Gly) (interchain with G-Cter in SUMO2) linkage. Residues 372-394 form a C2H2-type 1 zinc finger; the sequence is GNCKVCETHFQDRNSRVTHVLSH. The C2H2-type 2; atypical zinc-finger motif lies at 400 to 422; it reads FSCDMCETKFFTQWQLTLHRRDG. Lys439 is covalently cross-linked (Glycyl lysine isopeptide (Lys-Gly) (interchain with G-Cter in SUMO2)). The C2H2-type 3; atypical zinc-finger motif lies at 480 to 502; the sequence is QACSVCDQRHLNLCSLMWHTLSH. C2H2-type zinc fingers lie at residues 508 to 530, 538 to 560, 605 to 627, and 633 to 655; these read FSCS…MAVH, FHCR…VSQH, YSCK…RRIH, and YQCK…LKTH. The segment at 661-683 adopts a C2H2-type 8; atypical zinc-finger fold; it reads YRCTVCGHYSSTLNLMSKHVGVH.

Belongs to the krueppel C2H2-type zinc-finger protein family.

The protein resides in the nucleus. In terms of biological role, may be involved in transcriptional regulation. The chain is Zinc finger and BTB domain-containing protein 39 (ZBTB39) from Homo sapiens (Human).